We begin with the raw amino-acid sequence, 199 residues long: Large ribosomal subunit protein uL18 (199 aa).

This sequence belongs to the universal ribosomal protein uL18 family. As to quaternary structure, part of the 50S ribosomal subunit. Contacts the 5S and 23S rRNAs.

In terms of biological role, this is one of the proteins that bind and probably mediate the attachment of the 5S RNA into the large ribosomal subunit, where it forms part of the central protuberance. This chain is Large ribosomal subunit protein uL18, found in Saccharolobus solfataricus (strain ATCC 35092 / DSM 1617 / JCM 11322 / P2) (Sulfolobus solfataricus).